We begin with the raw amino-acid sequence, 146 residues long: 3-dehydroquinate dehydratase (146 aa).

Tyr-22 serves as the catalytic Proton acceptor. Residues Asn-74, His-80, and Asp-87 each coordinate substrate. The active-site Proton donor is His-100. Residues Leu-101–Ser-102 and Arg-111 each bind substrate.

Belongs to the type-II 3-dehydroquinase family. In terms of assembly, homododecamer.

The catalysed reaction is 3-dehydroquinate = 3-dehydroshikimate + H2O. It functions in the pathway metabolic intermediate biosynthesis; chorismate biosynthesis; chorismate from D-erythrose 4-phosphate and phosphoenolpyruvate: step 3/7. In terms of biological role, catalyzes a trans-dehydration via an enolate intermediate. This chain is 3-dehydroquinate dehydratase, found in Clostridium beijerinckii (strain ATCC 51743 / NCIMB 8052) (Clostridium acetobutylicum).